The sequence spans 221 residues: Translation initiation factor 6 (221 aa).

Belongs to the eIF-6 family.

Its function is as follows. Binds to the 50S ribosomal subunit and prevents its association with the 30S ribosomal subunit to form the 70S initiation complex. The sequence is that of Translation initiation factor 6 from Nitrosopumilus maritimus (strain SCM1).